A 291-amino-acid chain; its full sequence is N-acetylmannosamine kinase (291 aa).

ATP-binding positions include 5-12 (AIDIGGTK) and 132-139 (GVGGGVVC). Zn(2+) contacts are provided by histidine 156, cysteine 166, cysteine 168, and cysteine 173.

Belongs to the ROK (NagC/XylR) family. NanK subfamily. In terms of assembly, homodimer.

The enzyme catalyses an N-acyl-D-mannosamine + ATP = an N-acyl-D-mannosamine 6-phosphate + ADP + H(+). The protein operates within amino-sugar metabolism; N-acetylneuraminate degradation; D-fructose 6-phosphate from N-acetylneuraminate: step 2/5. Functionally, catalyzes the phosphorylation of N-acetylmannosamine (ManNAc) to ManNAc-6-P. This Salmonella dublin (strain CT_02021853) protein is N-acetylmannosamine kinase.